The sequence spans 289 residues: Pantothenate synthetase (289 aa).

30 to 37 (MGYLHKGH) contacts ATP. Histidine 37 acts as the Proton donor in catalysis. Glutamine 61 contributes to the (R)-pantoate binding site. Residue glutamine 61 coordinates beta-alanine. Residue 147–150 (GEKD) participates in ATP binding. Position 153 (glutamine 153) interacts with (R)-pantoate. ATP-binding positions include valine 176 and 184–187 (CSSR).

This sequence belongs to the pantothenate synthetase family. Homodimer.

Its subcellular location is the cytoplasm. It catalyses the reaction (R)-pantoate + beta-alanine + ATP = (R)-pantothenate + AMP + diphosphate + H(+). It functions in the pathway cofactor biosynthesis; (R)-pantothenate biosynthesis; (R)-pantothenate from (R)-pantoate and beta-alanine: step 1/1. In terms of biological role, catalyzes the condensation of pantoate with beta-alanine in an ATP-dependent reaction via a pantoyl-adenylate intermediate. In Allorhizobium ampelinum (strain ATCC BAA-846 / DSM 112012 / S4) (Agrobacterium vitis (strain S4)), this protein is Pantothenate synthetase.